The primary structure comprises 265 residues: Exosome complex component Rrp4 (265 aa).

The S1 motif domain occupies Gly65–Lys137. The KH domain occupies Lys147 to Ala205. Acidic residues predominate over residues Glu241–Glu254. The interval Glu241–Thr265 is disordered.

It belongs to the RRP4 family. Component of the archaeal exosome complex. Forms a trimer of Rrp4 and/or Csl4 subunits. The trimer associates with a hexameric ring-like arrangement composed of 3 Rrp41-Rrp42 heterodimers.

It localises to the cytoplasm. Functionally, non-catalytic component of the exosome, which is a complex involved in RNA degradation. Increases the RNA binding and the efficiency of RNA degradation. Confers strong poly(A) specificity to the exosome. This Pyrococcus horikoshii (strain ATCC 700860 / DSM 12428 / JCM 9974 / NBRC 100139 / OT-3) protein is Exosome complex component Rrp4.